The primary structure comprises 213 residues: Protein-L-isoaspartate O-methyltransferase (213 aa).

Residue Ser-62 is part of the active site.

Belongs to the methyltransferase superfamily. L-isoaspartyl/D-aspartyl protein methyltransferase family.

Its subcellular location is the cytoplasm. It catalyses the reaction [protein]-L-isoaspartate + S-adenosyl-L-methionine = [protein]-L-isoaspartate alpha-methyl ester + S-adenosyl-L-homocysteine. Its function is as follows. Catalyzes the methyl esterification of L-isoaspartyl residues in peptides and proteins that result from spontaneous decomposition of normal L-aspartyl and L-asparaginyl residues. It plays a role in the repair and/or degradation of damaged proteins. The sequence is that of Protein-L-isoaspartate O-methyltransferase from Desulfovibrio desulfuricans (strain ATCC 27774 / DSM 6949 / MB).